The chain runs to 301 residues: Cell division control protein 2 homolog 1 (301 aa).

In terms of domain architecture, Protein kinase spans 5-297 (YERLQKIGEG…AAQALEHPYF (293 aa)). Residues 11 to 19 (IGEGSYGVV) and Lys-34 contribute to the ATP site. The residue at position 15 (Ser-15) is a Phosphoserine. At Tyr-16 the chain carries Phosphotyrosine. The active-site Proton acceptor is Asp-127. Thr-160 carries the phosphothreonine; by CAK modification.

Belongs to the protein kinase superfamily. CMGC Ser/Thr protein kinase family. CDC2/CDKX subfamily. In terms of assembly, forms a stable but non-covalent complex with a regulatory subunit and with a cyclin.

It catalyses the reaction L-seryl-[protein] + ATP = O-phospho-L-seryl-[protein] + ADP + H(+). It carries out the reaction L-threonyl-[protein] + ATP = O-phospho-L-threonyl-[protein] + ADP + H(+). Its activity is regulated as follows. Phosphorylation at Ser-15 or Tyr-16 inactivates the enzyme, while phosphorylation at Thr-160 activates it. In terms of biological role, probably involved in the control of the cell cycle. In Trypanosoma brucei brucei, this protein is Cell division control protein 2 homolog 1 (CRK1).